The following is a 165-amino-acid chain: Destrin (165 aa).

Ala-2 bears the N-acetylalanine mark. The residue at position 3 (Ser-3) is a Phosphoserine. The ADF-H domain occupies 4–153 (GVQVADEVCR…NRACIAEKLG (150 aa)). At Lys-19 the chain carries N6-acetyllysine. The Nuclear localization signal motif lies at 30–34 (KKRKK).

This sequence belongs to the actin-binding proteins ADF family. In terms of processing, ISGylated.

In terms of biological role, actin-depolymerizing protein. Severs actin filaments (F-actin) and binds to actin monomers (G-actin). Acts in a pH-independent manner. This Bos taurus (Bovine) protein is Destrin (DSTN).